Consider the following 1026-residue polypeptide: Multidrug resistance protein MdtC (1026 aa).

A run of 11 helical transmembrane segments spans residues 15-35, 333-353, 360-380, 387-407, 431-451, 463-483, 528-548, 853-873, 897-917, 953-973, and 984-1004; these read ILIAAAITLCGILGFRLLPVA, EVEETLAISVALVIMVVFLFL, LIPAVAVPVSLIGTFAAMYLC, LSLMALTIATGFVVDDAIVVL, VGFTVISMSLSLVAVFLPLLL, FAVTLSVAIGISLVVSLTLTP, LVGVVFLGTVALNIWLYIAIP, LILIVAAIATVYIVLGILYES, LFNAPFSLIALIGIMLLIGIV, PIMMTTLAALFGALPLVLSGG, and ITIVGGLVMSQLLTLYTTPVV.

Belongs to the resistance-nodulation-cell division (RND) (TC 2.A.6) family. MdtC subfamily. In terms of assembly, part of a tripartite efflux system composed of MdtA, MdtB and MdtC. MdtC forms a heteromultimer with MdtB.

Its subcellular location is the cell inner membrane. This Salmonella choleraesuis (strain SC-B67) protein is Multidrug resistance protein MdtC.